A 1441-amino-acid polypeptide reads, in one-letter code: Cleavage and polyadenylation specificity factor subunit 1 (1441 aa).

4 disordered regions span residues 404–435 (PASSVREAADKEEPPSKKKRVEPAVGWTGGKT), 545–569 (EEETPKAESTEQEPSAPKAEEDGRR), 713–775 (GGAR…PAPF), and 899–921 (FREKKPKPSKKKAEGCSTEEGSG). Over residues 410 to 419 (EAADKEEPPS) the composition is skewed to basic and acidic residues. Phosphoserine occurs at positions 754 and 764. The segment covering 756–773 (SKEEARRSSQPPADRDPA) has biased composition (basic and acidic residues).

Belongs to the CPSF1 family. Component of the cleavage and polyadenylation specificity factor (CPSF) complex, composed of CPSF1, CPSF2, CPSF3, CPSF4 and FIP1L1. Found in a complex with CPSF1, FIP1L1 and PAPOLA. Interacts with FIP1L1 and SRRM1. Interacts with TUT1; the interaction is direct and mediates the recruitment of the CPSF complex on the 3'UTR of selected pre-mRNAs. Interacts with TENT2/GLD2.

Its subcellular location is the nucleus. The protein localises to the nucleoplasm. In terms of biological role, component of the cleavage and polyadenylation specificity factor (CPSF) complex that plays a key role in pre-mRNA 3'-end formation, recognizing the AAUAAA signal sequence and interacting with poly(A) polymerase and other factors to bring about cleavage and poly(A) addition. This subunit is involved in the RNA recognition step of the polyadenylation reaction. May play a role in eye morphogenesis and the development of retinal ganglion cell projections to the midbrain. The sequence is that of Cleavage and polyadenylation specificity factor subunit 1 (Cpsf1) from Mus musculus (Mouse).